Consider the following 247-residue polypeptide: PF03932 family protein CutC (247 aa).

The protein belongs to the CutC family.

The protein localises to the cytoplasm. This is PF03932 family protein CutC from Aliivibrio fischeri (strain MJ11) (Vibrio fischeri).